A 334-amino-acid chain; its full sequence is Large ribosomal subunit protein uL3 (334 aa).

Basic residues predominate over residues 1–10; the sequence is MGMKKNRPRR. The segment at 1–21 is disordered; it reads MGMKKNRPRRGSLAFSPRKRA.

This sequence belongs to the universal ribosomal protein uL3 family. Part of the 50S ribosomal subunit. Forms a cluster with proteins L14 and L24e.

Its function is as follows. One of the primary rRNA binding proteins, it binds directly near the 3'-end of the 23S rRNA, where it nucleates assembly of the 50S subunit. This is Large ribosomal subunit protein uL3 from Methanococcus maripaludis (strain DSM 14266 / JCM 13030 / NBRC 101832 / S2 / LL).